Here is a 378-residue protein sequence, read N- to C-terminus: Erythronate-4-phosphate dehydrogenase (378 aa).

Positions 45 and 66 each coordinate substrate. Residues D146 and T175 each contribute to the NAD(+) site. R208 is a catalytic residue. Residue D232 participates in NAD(+) binding. E237 is an active-site residue. The active-site Proton donor is H254. An NAD(+)-binding site is contributed by G257. Y258 provides a ligand contact to substrate.

The protein belongs to the D-isomer specific 2-hydroxyacid dehydrogenase family. PdxB subfamily. As to quaternary structure, homodimer.

Its subcellular location is the cytoplasm. The catalysed reaction is 4-phospho-D-erythronate + NAD(+) = (R)-3-hydroxy-2-oxo-4-phosphooxybutanoate + NADH + H(+). It participates in cofactor biosynthesis; pyridoxine 5'-phosphate biosynthesis; pyridoxine 5'-phosphate from D-erythrose 4-phosphate: step 2/5. Its function is as follows. Catalyzes the oxidation of erythronate-4-phosphate to 3-hydroxy-2-oxo-4-phosphonooxybutanoate. The chain is Erythronate-4-phosphate dehydrogenase from Escherichia coli (strain 55989 / EAEC).